The following is a 320-amino-acid chain: ATP-dependent 6-phosphofructokinase (320 aa).

Gly12 is a binding site for ATP. ADP is bound by residues 22-26 (RGVVR) and 55-60 (RYSVSD). ATP contacts are provided by residues 73-74 (RF) and 103-106 (GDGS). A Mg(2+)-binding site is contributed by Asp104. A substrate-binding site is contributed by 126–128 (TID). Asp128 functions as the Proton acceptor in the catalytic mechanism. Arg155 is an ADP binding site. Substrate-binding positions include Arg163 and 170 to 172 (MGR). ADP is bound by residues 186-188 (GCE), Lys212, and 214-216 (KKH). Substrate contacts are provided by residues Glu223, Arg244, and 250–253 (HIQR).

It belongs to the phosphofructokinase type A (PFKA) family. ATP-dependent PFK group I subfamily. Prokaryotic clade 'B1' sub-subfamily. As to quaternary structure, homotetramer. It depends on Mg(2+) as a cofactor.

It localises to the cytoplasm. It carries out the reaction beta-D-fructose 6-phosphate + ATP = beta-D-fructose 1,6-bisphosphate + ADP + H(+). It participates in carbohydrate degradation; glycolysis; D-glyceraldehyde 3-phosphate and glycerone phosphate from D-glucose: step 3/4. Allosterically activated by ADP and other diphosphonucleosides, and allosterically inhibited by phosphoenolpyruvate. Its function is as follows. Catalyzes the phosphorylation of D-fructose 6-phosphate to fructose 1,6-bisphosphate by ATP, the first committing step of glycolysis. The protein is ATP-dependent 6-phosphofructokinase of Pectobacterium carotovorum subsp. carotovorum (strain PC1).